Consider the following 95-residue polypeptide: Protein GOLVEN 9 (95 aa).

Residues Met1–Gly24 form the signal peptide. The propeptide occupies Pro25 to His73. Residues Glu72–His95 are disordered. At Tyr75 the chain carries Sulfotyrosine. Basic residues predominate over residues Lys80 to His95. Residue Pro86 is modified to Hydroxyproline. Residues Gly90–His95 constitute a propeptide that is removed on maturation.

Belongs to the RGF family. As to quaternary structure, binds to LRR receptor-like serine/threonine-protein kinases to trigger their dimerization with SERK proteins and subsequent signaling. In terms of tissue distribution, expressed in roots.

It is found in the secreted. Signaling peptide (root growth factor) required during root gravitropism in a PIN2-traffic dependent manner. Regulates the pattern of root growth and lateral root development by modulating the length and the number of cortical cells in the root apical meristem (RAM), and the anticlinal asymmetric cell divisions in lateral root initiation cells. The chain is Protein GOLVEN 9 from Arabidopsis thaliana (Mouse-ear cress).